A 463-amino-acid polypeptide reads, in one-letter code: Glutamate--tRNA ligase 2 (463 aa).

The 'HIGH' region signature appears at 10–20; sequence PSPTGYLHIGG. The 'KMSKS' region signature appears at 238–242; it reads KLSKR. An ATP-binding site is contributed by Lys241.

It belongs to the class-I aminoacyl-tRNA synthetase family. Glutamate--tRNA ligase type 1 subfamily. In terms of assembly, monomer.

Its subcellular location is the cytoplasm. The enzyme catalyses tRNA(Glu) + L-glutamate + ATP = L-glutamyl-tRNA(Glu) + AMP + diphosphate. In terms of biological role, catalyzes the attachment of glutamate to tRNA(Glu) in a two-step reaction: glutamate is first activated by ATP to form Glu-AMP and then transferred to the acceptor end of tRNA(Glu). This is Glutamate--tRNA ligase 2 from Helicobacter acinonychis (strain Sheeba).